We begin with the raw amino-acid sequence, 309 residues long: Curved DNA-binding protein (309 aa).

The J domain occupies 5–69 (DYYAILGVKP…ERRAEYDQLR (65 aa)).

The protein resides in the cytoplasm. The protein localises to the nucleoid. Functionally, DNA-binding protein that preferentially recognizes a curved DNA sequence. It is probably a functional analog of DnaJ; displays overlapping activities with DnaJ, but functions under different conditions, probably acting as a molecular chaperone in an adaptive response to environmental stresses other than heat shock. Lacks autonomous chaperone activity; binds native substrates and targets them for recognition by DnaK. Its activity is inhibited by the binding of CbpM. The polypeptide is Curved DNA-binding protein (Serratia proteamaculans (strain 568)).